A 254-amino-acid polypeptide reads, in one-letter code: tRNA (guanine-N(7)-)-methyltransferase (254 aa).

The disordered stretch occupies residues 1-34 (MNTNTPAHPPEGAPLSEATQAALASAEHAPDSPG). S-adenosyl-L-methionine-binding residues include glutamate 87, glutamate 112, aspartate 139, and aspartate 162. The active site involves aspartate 162. Substrate is bound by residues lysine 166, aspartate 198, and 233 to 236 (TKFE).

This sequence belongs to the class I-like SAM-binding methyltransferase superfamily. TrmB family.

It catalyses the reaction guanosine(46) in tRNA + S-adenosyl-L-methionine = N(7)-methylguanosine(46) in tRNA + S-adenosyl-L-homocysteine. It functions in the pathway tRNA modification; N(7)-methylguanine-tRNA biosynthesis. In terms of biological role, catalyzes the formation of N(7)-methylguanine at position 46 (m7G46) in tRNA. The protein is tRNA (guanine-N(7)-)-methyltransferase of Bordetella bronchiseptica (strain ATCC BAA-588 / NCTC 13252 / RB50) (Alcaligenes bronchisepticus).